Consider the following 528-residue polypeptide: Aspartic proteinase-like protein 1 (528 aa).

Positions 1–22 are cleaved as a signal peptide; sequence MVSRSAFLLFCVLFLATEETLA. The region spanning 100–449 is the Peptidase A1 domain; the sequence is HYTWIDIGTP…DRENMKLGWS (350 aa). D118 is a catalytic residue. N193 and N217 each carry an N-linked (GlcNAc...) asparagine glycan. Residue D333 is part of the active site. N358 and N391 each carry an N-linked (GlcNAc...) asparagine glycan. The tract at residues 451–503 is disordered; sequence SKCQEDKIEPPQASPGSTSSPNPLPTDEQQSRGGHAVSPAIAGKTPSKTPSSS. Polar residues predominate over residues 464–482; that stretch reads SPGSTSSPNPLPTDEQQSR. Positions 494 to 503 are enriched in low complexity; it reads KTPSKTPSSS. Residue S503 is the site of GPI-anchor amidated serine attachment. Positions 504-528 are cleaved as a propeptide — removed in mature form; sequence SSYSFSSIMRLFNSLLLLHWLASLM.

The protein belongs to the peptidase A1 family.

Its subcellular location is the cell membrane. In Arabidopsis thaliana (Mouse-ear cress), this protein is Aspartic proteinase-like protein 1.